We begin with the raw amino-acid sequence, 150 residues long: Small ribosomal subunit protein uS11 (150 aa).

The tract at residues 130–150 is disordered; sequence DVTPIPSDSTRRKSGRRGRRL. The segment covering 141 to 150 has biased composition (basic residues); the sequence is RKSGRRGRRL.

The protein belongs to the universal ribosomal protein uS11 family.

The chain is Small ribosomal subunit protein uS11 (RPS14) from Lupinus luteus (European yellow lupine).